We begin with the raw amino-acid sequence, 104 residues long: UPF0145 protein NP_2600A (104 aa).

This sequence belongs to the UPF0145 family.

The sequence is that of UPF0145 protein NP_2600A from Natronomonas pharaonis (strain ATCC 35678 / DSM 2160 / CIP 103997 / JCM 8858 / NBRC 14720 / NCIMB 2260 / Gabara) (Halobacterium pharaonis).